The chain runs to 354 residues: Uroporphyrinogen decarboxylase (354 aa).

Substrate-binding positions include Arg27 to Arg31, Phe46, Asp77, Tyr154, Ser209, and His327.

Belongs to the uroporphyrinogen decarboxylase family. In terms of assembly, homodimer.

The protein localises to the cytoplasm. The enzyme catalyses uroporphyrinogen III + 4 H(+) = coproporphyrinogen III + 4 CO2. It functions in the pathway porphyrin-containing compound metabolism; protoporphyrin-IX biosynthesis; coproporphyrinogen-III from 5-aminolevulinate: step 4/4. In terms of biological role, catalyzes the decarboxylation of four acetate groups of uroporphyrinogen-III to yield coproporphyrinogen-III. The polypeptide is Uroporphyrinogen decarboxylase (Pseudomonas syringae pv. tomato (strain ATCC BAA-871 / DC3000)).